The following is a 942-amino-acid chain: Lambda-carrageenase (942 aa).

An N-terminal signal peptide occupies residues 1 to 25; it reads MKIKILSAMIASSLLIGCVIPTVKA.

As to quaternary structure, monomer.

The protein resides in the secreted. The enzyme catalyses Endohydrolysis of (1-&gt;4)-beta-linkages in the backbone of lambda-carrageenan, resulting in the tetrasaccharide alpha-D-Galp2,6S2-(1-&gt;3)-beta-D-Galp2S-(1-&gt;4)-alpha-D-Galp2,6S2-(1-&gt;3)-D-Galp2S.. Functionally, hydrolyzes lambda-carrageenan with inversion of anomeric configuration. Does not hydrolyze iota- and kappa-carrageenans, agarose or porphyran. This is Lambda-carrageenase from Pseudoalteromonas sp.